A 636-amino-acid polypeptide reads, in one-letter code: Serine/threonine-protein kinase hal4 (636 aa).

Residues 1–11 (MGEKDKLHEIS) show a composition bias toward basic and acidic residues. 2 disordered regions span residues 1–167 (MGEK…AGVV) and 181–261 (AASP…PSSA). A compositionally biased stretch (pro residues) spans 33 to 45 (EPPPPSSQQPPST). Composition is skewed to polar residues over residues 56–92 (ALKQ…QQPL) and 113–124 (NPSRHVSSTSNK). The segment covering 140-155 (PSGSVPPSASVSRANS) has biased composition (low complexity). Over residues 182 to 226 (ASPNPSTPSNGPAPVSTTATPSRNPVTRLQRIFSQNSVSRQNSRT) the composition is skewed to polar residues. Serine 218 carries the post-translational modification Phosphoserine. Residues 234-261 (NTEETNSTGGSETGGAANSSSTSNPSSA) are compositionally biased toward low complexity. Threonine 238 and threonine 241 each carry phosphothreonine. At serine 299 the chain carries Phosphoserine. In terms of domain architecture, Protein kinase spans 351–623 (GRCQEVIGRG…AKQIMKSEWV (273 aa)). Residues 357-365 (IGRGAFGVV) and lysine 385 contribute to the ATP site. The Proton acceptor role is filled by aspartate 481.

It belongs to the protein kinase superfamily. Ser/Thr protein kinase family. As to quaternary structure, interacts with sty1.

Its subcellular location is the cytoplasm. It catalyses the reaction L-seryl-[protein] + ATP = O-phospho-L-seryl-[protein] + ADP + H(+). It carries out the reaction L-threonyl-[protein] + ATP = O-phospho-L-threonyl-[protein] + ADP + H(+). Its function is as follows. Promotes K(+) uptake, by the potassium transporter trk1-trk2, which leads to the subsequent cellular resistance to toxic cations such as Na(+), Li(+) and Ca(2+). In Schizosaccharomyces pombe (strain 972 / ATCC 24843) (Fission yeast), this protein is Serine/threonine-protein kinase hal4 (hal4).